The following is a 178-amino-acid chain: Gamma-crystallin S (178 aa).

S2 carries the post-translational modification N-acetylserine. Residues 2-5 (SKTG) form an N-terminal arm region. Beta/gamma crystallin 'Greek key' domains follow at residues 6–44 (AKISFYEDRNFQGRRYDCDCDCVDFRSYLSRCNSIRVEG) and 45–87 (GTWA…RAVH). The interval 88–93 (LSSGGQ) is connecting peptide. Beta/gamma crystallin 'Greek key' domains lie at 94–134 (YKIQ…KVLE) and 135–177 (GTWI…RRIV).

Belongs to the beta/gamma-crystallin family. Monomer.

In terms of biological role, crystallins are the dominant structural components of the vertebrate eye lens. The chain is Gamma-crystallin S (Crygs) from Rattus norvegicus (Rat).